We begin with the raw amino-acid sequence, 100 residues long: MKITQEEVTHVANLSKLRFSEKETAAFATTLSKIVDMVELLGEVDTTGVAPTTTMADRKTVLRPDVAEEGTDRDRLFKNVPEQDNYYIKVPAILDDGGDA.

Belongs to the GatC family. As to quaternary structure, heterotrimer of A, B and C subunits.

The catalysed reaction is L-glutamyl-tRNA(Gln) + L-glutamine + ATP + H2O = L-glutaminyl-tRNA(Gln) + L-glutamate + ADP + phosphate + H(+). It carries out the reaction L-aspartyl-tRNA(Asn) + L-glutamine + ATP + H2O = L-asparaginyl-tRNA(Asn) + L-glutamate + ADP + phosphate + 2 H(+). Functionally, allows the formation of correctly charged Asn-tRNA(Asn) or Gln-tRNA(Gln) through the transamidation of misacylated Asp-tRNA(Asn) or Glu-tRNA(Gln) in organisms which lack either or both of asparaginyl-tRNA or glutaminyl-tRNA synthetases. The reaction takes place in the presence of glutamine and ATP through an activated phospho-Asp-tRNA(Asn) or phospho-Glu-tRNA(Gln). This chain is Aspartyl/glutamyl-tRNA(Asn/Gln) amidotransferase subunit C, found in Streptococcus pneumoniae (strain P1031).